Consider the following 1243-residue polypeptide: DNA polymerase II large subunit (1243 aa).

The protein belongs to the archaeal DNA polymerase II family. As to quaternary structure, heterodimer of a large subunit and a small subunit.

The enzyme catalyses DNA(n) + a 2'-deoxyribonucleoside 5'-triphosphate = DNA(n+1) + diphosphate. The catalysed reaction is Exonucleolytic cleavage in the 3'- to 5'-direction to yield nucleoside 5'-phosphates.. In terms of biological role, possesses two activities: a DNA synthesis (polymerase) and an exonucleolytic activity that degrades single-stranded DNA in the 3'- to 5'-direction. Has a template-primer preference which is characteristic of a replicative DNA polymerase. In Nanoarchaeum equitans (strain Kin4-M), this protein is DNA polymerase II large subunit.